The chain runs to 74 residues: U3-agatoxin-Ao1d (74 aa).

The signal sequence occupies residues Met1–Ala20. Positions Ile21 to Arg34 are excised as a propeptide. 4 cysteine pairs are disulfide-bonded: Cys37–Cys53, Cys44–Cys58, Cys52–Cys68, and Cys60–Cys66. Ser72 is subject to Serine amide.

Belongs to the neurotoxin 07 (Beta/delta-agtx) family. 02 (aga-3) subfamily. In terms of tissue distribution, expressed by the venom gland.

It localises to the secreted. Insecticidal neurotoxin that induces an irreversible spastic paralysis when injected into insects. Modifies presynaptic voltage-gated sodium channels (Nav), causing them to open at the normal resting potential of the nerve. This leads to spontaneous release of neurotransmitter and repetitive action potentials in motor neurons. The polypeptide is U3-agatoxin-Ao1d (Agelena orientalis (Funnel-web spider)).